The primary structure comprises 329 residues: Phosphoenolpyruvate transferase (329 aa).

Aspartate 61 lines the 7,8-didemethyl-8-hydroxy-5-deazariboflavin pocket.

It belongs to the CofD family. In terms of assembly, homodimer. The cofactor is Mg(2+).

It carries out the reaction enolpyruvoyl-2-diphospho-5'-guanosine + 7,8-didemethyl-8-hydroxy-5-deazariboflavin = dehydro coenzyme F420-0 + GMP + H(+). It participates in cofactor biosynthesis; coenzyme F420 biosynthesis. Functionally, catalyzes the transfer of the phosphoenolpyruvate moiety from enoylpyruvoyl-2-diphospho-5'-guanosine (EPPG) to 7,8-didemethyl-8-hydroxy-5-deazariboflavin (FO) with the formation of dehydro coenzyme F420-0 and GMP. This Mycobacterium ulcerans (strain Agy99) protein is Phosphoenolpyruvate transferase.